A 380-amino-acid chain; its full sequence is Flap endonuclease 1-A (380 aa).

Positions 1-105 are N-domain; it reads MGIKGLTKLL…EELAKRFSKR (105 aa). Residue Asp-34 participates in Mg(2+) binding. Arg-71 is a binding site for DNA. Asp-87, Glu-159, Glu-161, Asp-180, and Asp-182 together coordinate Mg(2+). Residues 123 to 254 form an I-domain region; it reads AVEKLSKRTV…QTALKLIRQH (132 aa). Glu-159 is a DNA binding site. 2 residues coordinate DNA: Gly-232 and Asp-234. Asp-234 lines the Mg(2+) pocket. The interaction with PCNA stretch occupies residues 336 to 344; sequence SQGRLESFF. A disordered region spans residues 351–380; the sequence is SAPLKRKETSDKTSKAAAANKKTKAGGKKK. The segment covering 355–364 has biased composition (basic and acidic residues); sequence KRKETSDKTS. Over residues 371 to 380 the composition is skewed to basic residues; that stretch reads KKTKAGGKKK.

This sequence belongs to the XPG/RAD2 endonuclease family. FEN1 subfamily. Interacts with PCNA. Three molecules of FEN1 bind to one PCNA trimer with each molecule binding to one PCNA monomer. PCNA stimulates the nuclease activity without altering cleavage specificity. It depends on Mg(2+) as a cofactor. Post-translationally, phosphorylated. Phosphorylation upon DNA damage induces relocalization to the nuclear plasma.

It localises to the nucleus. The protein resides in the nucleolus. The protein localises to the nucleoplasm. It is found in the mitochondrion. Structure-specific nuclease with 5'-flap endonuclease and 5'-3' exonuclease activities involved in DNA replication and repair. During DNA replication, cleaves the 5'-overhanging flap structure that is generated by displacement synthesis when DNA polymerase encounters the 5'-end of a downstream Okazaki fragment. It enters the flap from the 5'-end and then tracks to cleave the flap base, leaving a nick for ligation. Also involved in the long patch base excision repair (LP-BER) pathway, by cleaving within the apurinic/apyrimidinic (AP) site-terminated flap. Acts as a genome stabilization factor that prevents flaps from equilibrating into structures that lead to duplications and deletions. Also possesses 5'-3' exonuclease activity on nicked or gapped double-stranded DNA, and exhibits RNase H activity. Also involved in replication and repair of rDNA and in repairing mitochondrial DNA. In Sorghum bicolor (Sorghum), this protein is Flap endonuclease 1-A.